The sequence spans 184 residues: Ribosome-recycling factor (184 aa).

The protein belongs to the RRF family.

It is found in the cytoplasm. Responsible for the release of ribosomes from messenger RNA at the termination of protein biosynthesis. May increase the efficiency of translation by recycling ribosomes from one round of translation to another. This chain is Ribosome-recycling factor, found in Clostridium botulinum (strain ATCC 19397 / Type A).